The following is a 785-amino-acid chain: Mitochondrial intermediate peptidase (785 aa).

The transit peptide at 1–43 directs the protein to the mitochondrion; that stretch reads MLTRPAQNALLKSMQPLFRFRGCLLAKSTSTPRRDISTSSRKL. Histidine 567 is a Zn(2+) binding site. Glutamate 568 is an active-site residue. Residues histidine 571 and histidine 574 each coordinate Zn(2+).

It belongs to the peptidase M3 family. It depends on Zn(2+) as a cofactor.

The protein localises to the mitochondrion matrix. The catalysed reaction is Release of an N-terminal octapeptide as second stage of processing of some proteins imported into the mitochondrion.. In terms of biological role, cleaves proteins, imported into the mitochondrion, to their mature size. While most mitochondrial precursor proteins are processed to the mature form in one step by mitochondrial processing peptidase (MPP), the sequential cleavage by MIP of an octapeptide after initial processing by MPP is a required step for a subgroup of nuclear-encoded precursor proteins destined for the matrix or the inner membrane. This Pleurotus djamor (Pink oyster mushroom) protein is Mitochondrial intermediate peptidase (OCT1).